We begin with the raw amino-acid sequence, 246 residues long: tRNA (guanine-N(1)-)-methyltransferase (246 aa).

Gly-114 serves as a coordination point for S-adenosyl-L-methionine.

Belongs to the RNA methyltransferase TrmD family. In terms of assembly, homodimer.

The protein localises to the cytoplasm. The enzyme catalyses guanosine(37) in tRNA + S-adenosyl-L-methionine = N(1)-methylguanosine(37) in tRNA + S-adenosyl-L-homocysteine + H(+). Functionally, specifically methylates guanosine-37 in various tRNAs. This is tRNA (guanine-N(1)-)-methyltransferase from Novosphingobium aromaticivorans (strain ATCC 700278 / DSM 12444 / CCUG 56034 / CIP 105152 / NBRC 16084 / F199).